The sequence spans 279 residues: HTH-type transcriptional regulator HdfR (279 aa).

One can recognise an HTH lysR-type domain in the interval 1 to 58 (MDTELLKTFLEVSRTRHFGRAAESLYLTQSAVSFRIRQLENQLGVNLFTRHRNNIRLT). Residues 18 to 37 (FGRAAESLYLTQSAVSFRIR) constitute a DNA-binding region (H-T-H motif).

Belongs to the LysR transcriptional regulatory family.

In terms of biological role, negatively regulates the transcription of the flagellar master operon flhDC by binding to the upstream region of the operon. The chain is HTH-type transcriptional regulator HdfR from Escherichia coli O7:K1 (strain IAI39 / ExPEC).